A 1261-amino-acid polypeptide reads, in one-letter code: ABC-type transmembrane transporter verA (1261 aa).

A helical membrane pass occupies residues 41–61 (IGCAFAAVCSGAAMPLMALIL). The region spanning 41 to 334 (IGCAFAAVCS…LGPNMPSFIK (294 aa)) is the ABC transmembrane type-1 1 domain. Asn-67 carries N-linked (GlcNAc...) asparagine glycosylation. The next 5 membrane-spanning stretches (helical) occupy residues 92–112 (LWFV…SFGF), 166–186 (LGIM…AFSQ), 190–210 (LTLV…FIVS), 270–290 (FVGL…AIGF), and 308–328 (ILSV…LGPN). Residues 374–618 (VELRDMSFAY…GGLYKRLYDA (245 aa)) enclose the ABC transporter 1 domain. Asn-396 carries N-linked (GlcNAc...) asparagine glycosylation. Residue 409-416 (GPSGAGKS) participates in ATP binding. Asn-463 carries an N-linked (GlcNAc...) asparagine glycan. 6 consecutive transmembrane segments (helical) span residues 686 to 706 (YWPI…IFPV), 734 to 754 (LMFF…GFFM), 808 to 828 (MGLL…GLAY), 830 to 850 (WKFA…AGYL), 913 to 933 (VMTL…ALGF), and 950 to 970 (FFTV…LFGF). In terms of domain architecture, ABC transmembrane type-1 2 spans 691–976 (LIGLVACVVT…LFGFSSNLGK (286 aa)). Asn-1007 and Asn-1021 each carry an N-linked (GlcNAc...) asparagine glycan. The ABC transporter 2 domain maps to 1017 to 1255 (VDMQNVTFAY…QGNYFKMHES (239 aa)). 1052–1059 (GTSGSGKS) lines the ATP pocket. Residue Asn-1106 is glycosylated (N-linked (GlcNAc...) asparagine).

It belongs to the ABC transporter superfamily. ABCB family. Multidrug resistance exporter (TC 3.A.1.201) subfamily.

The protein localises to the cell membrane. Functionally, ABC-type transmembrane transporter; part of the gene cluster that mediates the biosynthesis of 11'-deoxyverticillin A, one of the dimeric epipolythiodioxopiperazines (ETPs) from the verticillin family that are toxic secondary metabolites. The verA multidrug transporter is probably involved in the secretion of 11'-deoxyverticillin A. This is ABC-type transmembrane transporter verA from Clonostachys rogersoniana.